A 264-amino-acid polypeptide reads, in one-letter code: tRNA (guanine-N(1)-)-methyltransferase (264 aa).

Residues G125 and 145–150 each bind S-adenosyl-L-methionine; that span reads LGDFVL.

It belongs to the RNA methyltransferase TrmD family. In terms of assembly, homodimer.

It localises to the cytoplasm. It catalyses the reaction guanosine(37) in tRNA + S-adenosyl-L-methionine = N(1)-methylguanosine(37) in tRNA + S-adenosyl-L-homocysteine + H(+). In terms of biological role, specifically methylates guanosine-37 in various tRNAs. This chain is tRNA (guanine-N(1)-)-methyltransferase, found in Burkholderia ambifaria (strain MC40-6).